A 233-amino-acid chain; its full sequence is LexA repressor (233 aa).

The segment at residues Phe-26 to Thr-46 is a DNA-binding region (H-T-H motif). Active-site for autocatalytic cleavage activity residues include Ser-154 and Lys-192.

Belongs to the peptidase S24 family. In terms of assembly, homodimer.

The catalysed reaction is Hydrolysis of Ala-|-Gly bond in repressor LexA.. Its function is as follows. Represses a number of genes involved in the response to DNA damage (SOS response), including recA and lexA. In the presence of single-stranded DNA, RecA interacts with LexA causing an autocatalytic cleavage which disrupts the DNA-binding part of LexA, leading to derepression of the SOS regulon and eventually DNA repair. This chain is LexA repressor, found in Nitrobacter winogradskyi (strain ATCC 25391 / DSM 10237 / CIP 104748 / NCIMB 11846 / Nb-255).